The following is a 416-amino-acid chain: Protein MID1-COMPLEMENTING ACTIVITY 2 (416 aa).

Residues 191-219 (CEALKTEEEKLQLELQRSRARYDADQCEV) are a coiled coil. The chain crosses the membrane as a helical span at residues 338 to 354 (LIVYSLILSCCCYTCCI).

In terms of tissue distribution, expressed in roots, leaves, stems, flowers and siliques. In the root, high levels of expression in vascular tissues, in the stele and endodermis, but no expression in the cortex, epidermis, root cap, promeristem and adjacent elongation zone of the primary root. Not expressed in root hairs. Detected in shoot apical meristem, leaf mesophyll cells and vascular tissues, upper half of inflorescence, but not in petioles of rosette leaves.

Its subcellular location is the cell membrane. Its activity is regulated as follows. Inhibited by GdCl(3), but not by verapamil. Functionally, calcium-permeable stretch-activated channel component. Probably involved in mechanosensing and in mechano-stimulated calcium uptake mechanism. The sequence is that of Protein MID1-COMPLEMENTING ACTIVITY 2 (MCA2) from Arabidopsis thaliana (Mouse-ear cress).